We begin with the raw amino-acid sequence, 197 residues long: Probable GTP-binding protein EngB (197 aa).

The 174-residue stretch at 22-195 (NLPEIAFVGR…VDYLFDDLVE (174 aa)) folds into the EngB-type G domain. GTP contacts are provided by residues 30 to 37 (GRSNVGKS), 57 to 61 (GKTRL), 75 to 78 (DLPG), 142 to 145 (TKSD), and 174 to 176 (FSS). Mg(2+) is bound by residues Ser-37 and Thr-59.

It belongs to the TRAFAC class TrmE-Era-EngA-EngB-Septin-like GTPase superfamily. EngB GTPase family. Requires Mg(2+) as cofactor.

Its function is as follows. Necessary for normal cell division and for the maintenance of normal septation. In Clostridium perfringens (strain SM101 / Type A), this protein is Probable GTP-binding protein EngB.